Consider the following 288-residue polypeptide: Killer cell lectin-like receptor 2 (288 aa).

At 1-45 (MSEQEVTYTTLRFHKSSGLQNPVRPEETQRPRDVGHRECSVPWKF) the chain is on the cytoplasmic side. A helical; Signal-anchor for type II membrane protein membrane pass occupies residues 46–66 (IVIVLGILCFLLLLTVAVLVI). Residues 67–288 (HIFRDGQEKH…SALQRDEDES (222 aa)) lie on the Extracellular side of the membrane. Residues asparagine 94, asparagine 105, and asparagine 114 are each glycosylated (N-linked (GlcNAc...) asparagine). The C-type lectin domain occupies 144 to 263 (QVEGYWFCCG…THGCICEKRL (120 aa)). 4 disulfides stabilise this stretch: cysteine 151–cysteine 156, cysteine 169–cysteine 257, cysteine 173–cysteine 259, and cysteine 238–cysteine 251. Asparagine 177 carries N-linked (GlcNAc...) asparagine glycosylation.

As to quaternary structure, homodimer; disulfide-linked.

The protein localises to the membrane. In terms of biological role, receptor on natural killer (NK) cells for class I MHC. This Mus musculus (Mouse) protein is Killer cell lectin-like receptor 2 (Klra2).